The following is a 561-amino-acid chain: MAAPRESLRRRKAGAGDPEPEAPPGQGRDLKGRPARLRAGTFWLTRIVLLRALAFVYFVAFLVAFHQNKQLIGDRGLLPCRAYLQSVQRHFGGRVSWDALSYAPTILWLLDWSHMDANLDALALLGLGISSFILVSGCANMVLMAALWVLYMSLVNVGQIWYSFGWESQLLETGFLGIFLCPLWTLSALPRGTPTSWVVMWGFRWLIFRIMLGAGLIKIRGDRCWRDLTCMDFHYETQPVPNPVAYFLHRSPWWFHRFETLSNHFLELVVPFFIFLGRRMCIVHGALQVLFQVVLIISGNLSFLNWLTIVPSLACFDDATLGGLFPSGPGRLKDQVLKIQEEETRGARAPRTRGSVARGTVNLALGILVAWLSIPVVLNLLSPRQVMNSSFNPLRIVNTYGAFGSITRERTEVILQGTASANASAPDSAWEDYEFKCKPGDPRRRPCLISPYHHRLDWLMWFAAFQTYEHNEWIIHLAGKLLANDAQALSLLARNPFEGRDPPRWVRGEHYRYKFSRPGGRHAAEGKWWIRRRLGPYFPPLSRQDLRGYFTSRQWPYPEPE.

The disordered stretch occupies residues 1 to 32 (MAAPRESLRRRKAGAGDPEPEAPPGQGRDLKG). Residues 1–42 (MAAPRESLRRRKAGAGDPEPEAPPGQGRDLKGRPARLRAGTF) lie on the Cytoplasmic side of the membrane. Residues 43–65 (WLTRIVLLRALAFVYFVAFLVAF) traverse the membrane as a helical segment. At 66–120 (HQNKQLIGDRGLLPCRAYLQSVQRHFGGRVSWDALSYAPTILWLLDWSHMDANLD) the chain is on the lumenal side. Residues 121–144 (ALALLGLGISSFILVSGCANMVLM) form a helical membrane-spanning segment. The Cytoplasmic segment spans residues 145 to 200 (AALWVLYMSLVNVGQIWYSFGWESQLLETGFLGIFLCPLWTLSALPRGTPTSWVVM). A helical membrane pass occupies residues 201-214 (WGFRWLIFRIMLGA). Residues 215–285 (GLIKIRGDRC…LGRRMCIVHG (71 aa)) are Lumenal-facing. The helical transmembrane segment at 286–314 (ALQVLFQVVLIISGNLSFLNWLTIVPSLA) threads the bilayer. Residues 315–360 (CFDDATLGGLFPSGPGRLKDQVLKIQEEETRGARAPRTRGSVARGT) lie on the Cytoplasmic side of the membrane. A helical transmembrane segment spans residues 361-382 (VNLALGILVAWLSIPVVLNLLS). The Lumenal segment spans residues 383–561 (PRQVMNSSFN…SRQWPYPEPE (179 aa)).

The protein belongs to the lipase maturation factor family. As to quaternary structure, interacts with LPL and SEL1L.

It localises to the endoplasmic reticulum membrane. In terms of biological role, involved in the maturation of specific proteins in the endoplasmic reticulum. Required for maturation and transport of active lipoprotein lipase (LPL) through the secretory pathway. Each LMF1 molecule chaperones 50 or more molecules of LPL. The protein is Lipase maturation factor 1 (LMF1) of Bos taurus (Bovine).